Here is a 132-residue protein sequence, read N- to C-terminus: Small ribosomal subunit protein uS8 (132 aa).

It belongs to the universal ribosomal protein uS8 family. As to quaternary structure, part of the 30S ribosomal subunit. Contacts proteins S5 and S12.

One of the primary rRNA binding proteins, it binds directly to 16S rRNA central domain where it helps coordinate assembly of the platform of the 30S subunit. The protein is Small ribosomal subunit protein uS8 of Streptomyces coelicolor (strain ATCC BAA-471 / A3(2) / M145).